The sequence spans 644 residues: Sodium/potassium/calcium exchanger 3 (644 aa).

The signal sequence occupies residues 1–44; the sequence is MRPSGDEDRARRRRRRRRRRDLLLSQLCFLASVALLLWSLSSLR. Topologically, residues 45 to 107 are extracellular; sequence EQKELDLMDL…DIFTNEDRRQ (63 aa). 2 N-linked (GlcNAc...) asparagine glycosylation sites follow: N71 and N86. A helical membrane pass occupies residues 108 to 128; it reads GAVVLHVLCAIYMFYALAIVC. Residues 129 to 153 lie on the Cytoplasmic side of the membrane; it reads DDFFVPSLEKICERLHLSEDVAGAT. Residues 149-189 form an Alpha-1 repeat; the sequence is VAGATFMAAGSSAPELFTSVIGVFITKGDVGVGTIVGSAVF. Residues 154–174 form a helical membrane-spanning segment; that stretch reads FMAAGSSAPELFTSVIGVFIT. Residues 175–182 lie on the Extracellular side of the membrane; that stretch reads KGDVGVGT. A helical membrane pass occupies residues 183-203; the sequence is IVGSAVFNILCIIGVCGLFAG. Over 204–210 the chain is Cytoplasmic; the sequence is QVVALSS. The chain crosses the membrane as a helical span at residues 211-231; it reads WCLLRDSIYYTLSVIALIVFI. The Extracellular segment spans residues 232–234; that stretch reads YDE. Residues 235–255 form a helical membrane-spanning segment; it reads KVSWWESLVLVLMYLIYIVIM. The Cytoplasmic portion of the chain corresponds to 256-484; sequence KYNACIHQCF…WFMVTFASST (229 aa). S308 carries the post-translational modification Phosphoserine. The segment at 405 to 442 is disordered; sequence AEAGNETENENEDNENDEEEEEDEDDDEGPYTPFDTPS. Over residues 409 to 433 the composition is skewed to acidic residues; that stretch reads NETENENEDNENDEEEEEDEDDDEG. Residues 485–505 form a helical membrane-spanning segment; sequence LWIAAFSYMMVWMVTIIGYTL. Topologically, residues 506–510 are extracellular; it reads GIPDV. A helical transmembrane segment spans residues 511–531; it reads IMGITFLAAGTSVPDCMASLI. Residues 518 to 549 form an Alpha-2 repeat; it reads AAGTSVPDCMASLIVARQGMGDMAVSNSIGSN. Residues 532 to 549 lie on the Cytoplasmic side of the membrane; it reads VARQGMGDMAVSNSIGSN. The chain crosses the membrane as a helical span at residues 550–570; that stretch reads VFDILIGLGLPWALQTLAVDY. At 571–580 the chain is on the extracellular side; the sequence is GSYIRLNSRG. The chain crosses the membrane as a helical span at residues 581-601; it reads LIYSVGLLLASVFVTVFGVHL. Over 602-615 the chain is Cytoplasmic; that stretch reads NKWQLDKKLGCGCL. Residues 616–636 traverse the membrane as a helical segment; the sequence is LLYGVFLCFSIMTEFNVFTFV. Over 637–644 the chain is Extracellular; it reads NLPMCGDH.

It belongs to the Ca(2+):cation antiporter (CaCA) (TC 2.A.19) family. SLC24A subfamily. Abundant in the brain. Expressed at low levels in the aorta, uterus and intestine.

The protein resides in the cell membrane. The enzyme catalyses Ca(2+)(out) + K(+)(out) + 4 Na(+)(in) = Ca(2+)(in) + K(+)(in) + 4 Na(+)(out). Calcium, potassium:sodium antiporter that transports 1 Ca(2+) and 1 K(+) in exchange for 4 Na(+). The protein is Sodium/potassium/calcium exchanger 3 (SLC24A3) of Homo sapiens (Human).